Reading from the N-terminus, the 153-residue chain is Arginine repressor (153 aa).

The protein belongs to the ArgR family.

It localises to the cytoplasm. It functions in the pathway amino-acid biosynthesis; L-arginine biosynthesis [regulation]. Its function is as follows. Regulates arginine biosynthesis genes. In Actinobacillus pleuropneumoniae serotype 5b (strain L20), this protein is Arginine repressor.